Reading from the N-terminus, the 430-residue chain is MSSVVVVGTQWGDEGKGKITDFLSENAEVIARYQGGNNAGHTIKFDGITYKLHLIPSGIFYKDKTCVIGNGMVVDPKALVTELAYLHERNVSTDNLRISNRAHVILPYHLKLDEVEEERKGANKIGTTKKGIGPAYMDKAARIGIRIADLLDRDAFAEKLERNLEEKNRLLEKMYETEGFKLEDILDEYYEYGQQIKKYVCDTSVVLNDALDEGRRVLFEGAQGVMLDIDQGTYPFVTSSNPVAAVSQSVLVSARPKIKHVVGVSKAYTTRVGDGPFPTELKDEIGDQIREVGREYGTTTGRPPRVGWFDSVVVRHARRVSGITDLSLNSIDVLAGIETLKICVRYRYKGEIIEEFPASLKALAECEPVYEEMPGWTEDITGAKSLSELPENARHYLERVSQLTGIPLSIFSVGPDRSQTNVLRSVYRAN.

Residues 12 to 18 (GDEGKGK) and 40 to 42 (GHT) each bind GTP. Asp-13 serves as the catalytic Proton acceptor. Residues Asp-13 and Gly-40 each coordinate Mg(2+). IMP-binding positions include 13–16 (DEGK), 38–41 (NAGH), Thr-128, Arg-142, Gln-223, Thr-238, and Arg-302. His-41 functions as the Proton donor in the catalytic mechanism. Residues 330 to 332 (SID) and 412 to 414 (SVG) each bind GTP.

The protein belongs to the adenylosuccinate synthetase family. As to quaternary structure, homodimer. The cofactor is Mg(2+).

Its subcellular location is the cytoplasm. It carries out the reaction IMP + L-aspartate + GTP = N(6)-(1,2-dicarboxyethyl)-AMP + GDP + phosphate + 2 H(+). It functions in the pathway purine metabolism; AMP biosynthesis via de novo pathway; AMP from IMP: step 1/2. Its function is as follows. Plays an important role in the de novo pathway of purine nucleotide biosynthesis. Catalyzes the first committed step in the biosynthesis of AMP from IMP. The protein is Adenylosuccinate synthetase of Bacillus subtilis (strain 168).